Consider the following 75-residue polypeptide: MATGTRTSCYRRATSSLMARLARRPSSLTRFTASERRSRTWWTGSGCAGVSWRTQRLSTTVTRPASTTAATLSAG.

This is an uncharacterized protein from Acidithiobacillus ferridurans.